We begin with the raw amino-acid sequence, 297 residues long: 4-hydroxy-tetrahydrodipicolinate synthase (297 aa).

Residue T47 coordinates pyruvate. The Proton donor/acceptor role is filled by Y136. The active-site Schiff-base intermediate with substrate is K165. T206 lines the pyruvate pocket.

Belongs to the DapA family. In terms of assembly, homotetramer; dimer of dimers.

It is found in the cytoplasm. It carries out the reaction L-aspartate 4-semialdehyde + pyruvate = (2S,4S)-4-hydroxy-2,3,4,5-tetrahydrodipicolinate + H2O + H(+). It functions in the pathway amino-acid biosynthesis; L-lysine biosynthesis via DAP pathway; (S)-tetrahydrodipicolinate from L-aspartate: step 3/4. In terms of biological role, catalyzes the condensation of (S)-aspartate-beta-semialdehyde [(S)-ASA] and pyruvate to 4-hydroxy-tetrahydrodipicolinate (HTPA). In Sulfurovum sp. (strain NBC37-1), this protein is 4-hydroxy-tetrahydrodipicolinate synthase.